A 412-amino-acid chain; its full sequence is Ornithine cyclodeaminase (412 aa).

Asn-237, Ala-238, Asp-316, Thr-348, Met-349, Leu-350, His-351, Asp-369, Asp-392, and Val-393 together coordinate NAD(+).

The protein belongs to the AgrE/ArgZ ornithine cyclodeaminase family. NAD(+) is required as a cofactor.

The enzyme catalyses L-ornithine = L-proline + NH4(+). Catalyzes the conversion of ornithine to proline, with the release of ammonia. In Methanopyrus kandleri (strain AV19 / DSM 6324 / JCM 9639 / NBRC 100938), this protein is Ornithine cyclodeaminase.